The chain runs to 268 residues: Shikimate dehydrogenase (NADP(+)) (268 aa).

Residues 14–16 and Thr-61 contribute to the shikimate site; that span reads SKS. Lys-65 serves as the catalytic Proton acceptor. 2 residues coordinate shikimate: Asn-86 and Asp-102. NADP(+)-binding positions include 126–130, 149–154, and Met-213; these read GAGGA and NRTFLK. Residue Tyr-215 coordinates shikimate. Gly-238 contributes to the NADP(+) binding site.

It belongs to the shikimate dehydrogenase family. In terms of assembly, homodimer.

The catalysed reaction is shikimate + NADP(+) = 3-dehydroshikimate + NADPH + H(+). It participates in metabolic intermediate biosynthesis; chorismate biosynthesis; chorismate from D-erythrose 4-phosphate and phosphoenolpyruvate: step 4/7. Functionally, involved in the biosynthesis of the chorismate, which leads to the biosynthesis of aromatic amino acids. Catalyzes the reversible NADPH linked reduction of 3-dehydroshikimate (DHSA) to yield shikimate (SA). This is Shikimate dehydrogenase (NADP(+)) from Haemophilus influenzae (strain PittGG).